A 177-amino-acid polypeptide reads, in one-letter code: Crossover junction endodeoxyribonuclease RuvC (177 aa).

Residues aspartate 8, glutamate 72, and aspartate 144 contribute to the active site. Positions 8, 72, and 144 each coordinate Mg(2+).

This sequence belongs to the RuvC family. In terms of assembly, homodimer which binds Holliday junction (HJ) DNA. The HJ becomes 2-fold symmetrical on binding to RuvC with unstacked arms; it has a different conformation from HJ DNA in complex with RuvA. In the full resolvosome a probable DNA-RuvA(4)-RuvB(12)-RuvC(2) complex forms which resolves the HJ. Mg(2+) serves as cofactor.

Its subcellular location is the cytoplasm. The enzyme catalyses Endonucleolytic cleavage at a junction such as a reciprocal single-stranded crossover between two homologous DNA duplexes (Holliday junction).. The RuvA-RuvB-RuvC complex processes Holliday junction (HJ) DNA during genetic recombination and DNA repair. Endonuclease that resolves HJ intermediates. Cleaves cruciform DNA by making single-stranded nicks across the HJ at symmetrical positions within the homologous arms, yielding a 5'-phosphate and a 3'-hydroxyl group; requires a central core of homology in the junction. The consensus cleavage sequence is 5'-(A/T)TT(C/G)-3'. Cleavage occurs on the 3'-side of the TT dinucleotide at the point of strand exchange. HJ branch migration catalyzed by RuvA-RuvB allows RuvC to scan DNA until it finds its consensus sequence, where it cleaves and resolves the cruciform DNA. This is Crossover junction endodeoxyribonuclease RuvC from Teredinibacter turnerae (strain ATCC 39867 / T7901).